A 127-amino-acid chain; its full sequence is Glycine cleavage system H protein (127 aa).

Residues 24–105 enclose the Lipoyl-binding domain; sequence TALAGITDFA…YGEGWLVKIK (82 aa). Position 65 is an N6-lipoyllysine (lysine 65).

It belongs to the GcvH family. In terms of assembly, the glycine cleavage system is composed of four proteins: P, T, L and H. (R)-lipoate is required as a cofactor.

The glycine cleavage system catalyzes the degradation of glycine. The H protein shuttles the methylamine group of glycine from the P protein to the T protein. This is Glycine cleavage system H protein from Chlorobium phaeobacteroides (strain DSM 266 / SMG 266 / 2430).